The following is a 129-amino-acid chain: Large ribosomal subunit protein bL20 (129 aa).

It belongs to the bacterial ribosomal protein bL20 family.

Its function is as follows. Binds directly to 23S ribosomal RNA and is necessary for the in vitro assembly process of the 50S ribosomal subunit. It is not involved in the protein synthesizing functions of that subunit. This chain is Large ribosomal subunit protein bL20, found in Rhodococcus jostii (strain RHA1).